Consider the following 515-residue polypeptide: VEDHCYYHGRVQNDAESTASISACNGLKGHFKLQGETYFIEPLKIPNSEAHAVYKYENIEKEDEAPKMCGVTQTNWESDEPIKKTLGLIVPPHGQKFEKKFIELIIVVDHSMVTKYNNDLTAVRTEIYERLNTVNEIYLPLNIHVALVGIVFWSNRDLINVTSSAADTLHSFGEWRGSDLLNQKRHDHAQLLTNVTLDGTTLGITFVFGMCKSDRSVELIRDYSNITFNMAYIMAHEMGHSLGMLHDTKSCTCGDKPCIMFSKESVPPPKEFSSCSYDQYNKYLLKYNPKCIVDPPLRKDIASPAVCGNGVWEEGEECDCGSPEDCENPCCDAATCKLKPGAECGNGECCDNCKIRKAGTECRPARDDCDVAEHCTGQSAECPRNEFQRNGQPCLNNSGYCYNGDCPIMLNQCIALFSPSATVAQDSCFQRNLQGSYYGHCRKEIGHYGKRFPCAAQDVKCGRLYCLDNSFKKNMRCKKDFSYSDENKGIVEPGTKCEDGKVCINRKCVDVNTAY.

The propeptide occupies 1 to 94; it reads VEDHCYYHGR…TLGLIVPPHG (94 aa). Position 95 is a pyrrolidone carboxylic acid (glutamine 95). The Peptidase M12B domain maps to 100–296; it reads KFIELIIVVD…YNPKCIVDPP (197 aa). Glutamate 103 contacts Ca(2+). Asparagine 160 is a glycosylation site (N-linked (GlcNAc...) asparagine). A Ca(2+)-binding site is contributed by aspartate 187. Residues asparagine 194 and asparagine 225 are each glycosylated (N-linked (GlcNAc...) asparagine). 3 disulfide bridges follow: cysteine 211–cysteine 291, cysteine 251–cysteine 275, and cysteine 253–cysteine 258. Position 236 (histidine 236) interacts with Zn(2+). Residue glutamate 237 is part of the active site. Zn(2+)-binding residues include histidine 240 and histidine 246. The Ca(2+) site is built by cysteine 291, valine 306, asparagine 309, valine 311, glutamate 313, glutamate 316, and aspartate 319. One can recognise a Disintegrin domain in the interval 304–390; that stretch reads PAVCGNGVWE…ECPRNEFQRN (87 aa). Intrachain disulfides connect cysteine 307–cysteine 336, cysteine 318–cysteine 331, cysteine 320–cysteine 326, cysteine 330–cysteine 353, cysteine 344–cysteine 350, cysteine 349–cysteine 375, cysteine 362–cysteine 382, cysteine 369–cysteine 401, cysteine 394–cysteine 406, cysteine 413–cysteine 466, cysteine 428–cysteine 477, cysteine 441–cysteine 454, cysteine 461–cysteine 503, and cysteine 497–cysteine 508. Positions 368 to 370 match the D/ECD-tripeptide motif; it reads DCD. Ca(2+) is bound by residues aspartate 370, valine 371, and asparagine 385.

This sequence belongs to the venom metalloproteinase (M12B) family. P-III subfamily. P-IIIa sub-subfamily. Monomer. Zn(2+) is required as a cofactor. Expressed by the venom gland.

The protein resides in the secreted. Functionally, snake venom zinc metalloproteinase that catalyzes the conversion of prothrombin (F2) to alpha-thrombin through formation of a thrombin intermediate, thereby functioning as a procoagulant protein. This is Zinc metalloproteinase-disintegrin-like EoMP06 from Echis ocellatus (Ocellated saw-scaled viper).